The primary structure comprises 232 residues: Fibrillarin-like rRNA/tRNA 2'-O-methyltransferase (232 aa).

Residues 89–90 (TT), 108–109 (EF), 133–134 (DA), and 153–156 (DIAQ) each bind S-adenosyl-L-methionine.

The protein belongs to the methyltransferase superfamily. Fibrillarin family. Interacts with nop5. Component of box C/D small ribonucleoprotein (sRNP) particles that contain rpl7ae, FlpA and nop5, plus a guide RNA.

Its function is as follows. Involved in pre-rRNA and tRNA processing. Utilizes the methyl donor S-adenosyl-L-methionine to catalyze the site-specific 2'-hydroxyl methylation of ribose moieties in rRNA and tRNA. Site specificity is provided by a guide RNA that base pairs with the substrate. Methylation occurs at a characteristic distance from the sequence involved in base pairing with the guide RNA. In Saccharolobus islandicus (strain L.S.2.15 / Lassen #1) (Sulfolobus islandicus), this protein is Fibrillarin-like rRNA/tRNA 2'-O-methyltransferase.